The following is a 179-amino-acid chain: Large ribosomal subunit protein uL5 (179 aa).

It belongs to the universal ribosomal protein uL5 family. Part of the 50S ribosomal subunit; part of the 5S rRNA/L5/L18/L25 subcomplex. Contacts the 5S rRNA and the P site tRNA. Forms a bridge to the 30S subunit in the 70S ribosome.

In terms of biological role, this is one of the proteins that bind and probably mediate the attachment of the 5S RNA into the large ribosomal subunit, where it forms part of the central protuberance. In the 70S ribosome it contacts protein S13 of the 30S subunit (bridge B1b), connecting the 2 subunits; this bridge is implicated in subunit movement. Contacts the P site tRNA; the 5S rRNA and some of its associated proteins might help stabilize positioning of ribosome-bound tRNAs. The protein is Large ribosomal subunit protein uL5 of Clostridium botulinum (strain Alaska E43 / Type E3).